The following is an 864-amino-acid chain: Leucine--tRNA ligase (864 aa).

The short motif at 42–52 (PYPSGKLHMGH) is the 'HIGH' region element. The short motif at 624 to 628 (KMSKS) is the 'KMSKS' region element. Residue Lys-627 coordinates ATP.

The protein belongs to the class-I aminoacyl-tRNA synthetase family.

It is found in the cytoplasm. It carries out the reaction tRNA(Leu) + L-leucine + ATP = L-leucyl-tRNA(Leu) + AMP + diphosphate. This is Leucine--tRNA ligase from Burkholderia vietnamiensis (strain G4 / LMG 22486) (Burkholderia cepacia (strain R1808)).